Here is an 82-residue protein sequence, read N- to C-terminus: Diphthamide biosynthesis protein 3 (82 aa).

The DPH-type MB domain maps to 3–59 (TYDEIEIEDMTFEPENQMFTYPCPCGDRFQIYLDDMFEGEKVAVCPSCSLMIDVVFD). C25, C27, C47, and C50 together coordinate Fe cation. The interval 66–82 (YYEEAGIHPPEPIAAAA) is required for interaction with the elongator complex.

This sequence belongs to the DPH3 family. As to quaternary structure, component of the 2-(3-amino-3-carboxypropyl)histidine synthase complex composed of DPH1, DPH2, KTI11/DPH3 and a NADH-dependent reductase, predominantly CBR1. Interacts with DPH1. Interacts with DPH2. Interacts with CBR1. Interacts with elongation factor 2. Interacts with ATS1/KTI13; the interaction is direct. Interacts with the 40S ribosomal protein RPS7A. Interacts with the 40S ribosomal protein RPS19A. Interacts with the elongator complex subunit IKI3/ELP1. Interacts with the elongator complex subunit ELP2. Interacts with the elongator complex subunit ELP3. Interacts with the elongator complex subunit ELP5.

Its subcellular location is the cytoplasm. The protein resides in the nucleus. The enzyme catalyses [3Fe-4S](1+)-[protein] + Fe(2+)-[Dph3] = [3Fe-4S](0)-[protein] + Fe(3+)-[Dph3]. The catalysed reaction is 2 [3Fe-4S](0)-[protein] + 2 Fe(2+)-[Dph3] + NADH = 2 [4Fe-4S](1+)-[protein] + 2 [Dph3] + NAD(+) + H(+). It functions in the pathway protein modification; peptidyl-diphthamide biosynthesis. Functionally, required for the first step of diphthamide biosynthesis, a post-translational modification of histidine which occurs in elongation factor 2. DPH1 and DPH2 transfer a 3-amino-3-carboxypropyl (ACP) group from S-adenosyl-L-methionine (SAM) to a histidine residue, the reaction is assisted by a reduction system comprising KTI11/DPH3 and a NADH-dependent reductase, predominantly CBR1. Acts as an electron donor to reduce the Fe-S cluster in DPH1-DPH2 keeping the [4Fe-4S] clusters in the active and reduced state. Restores iron to DPH1-DPH2 iron-sulfur clusters which have degraded from [4Fe-4S] to [3Fe-4S] by donating an iron atom to reform [4Fe-4S] clusters, in a manner dependent on the presence of elongation factor 2 and SAM. Together with ATS1; associates with the elongator complex and is required for tRNA Wobble base modifications mediated by the elongator complex. The elongator complex is required for multiple tRNA modifications, including mcm5U (5-methoxycarbonylmethyl uridine), mcm5s 2U (5-methoxycarbonylmethyl-2-thiouridine), and ncm5U (5-carbamoylmethyl uridine). The chain is Diphthamide biosynthesis protein 3 from Saccharomyces cerevisiae (strain ATCC 204508 / S288c) (Baker's yeast).